A 195-amino-acid polypeptide reads, in one-letter code: MSIRVGQKAPDFTATAVFDQEFGTIRLSDYLDKRYVVLFFYPLDFTFVCPTEITAFSDRFKEFKELSTEVLGVSVDSEFSHLAWTQIDRKSGGLGELEYPLVSDLKKEISSSYNVLTEDGVALRALFIIDKEGIIQHSTVNNLSFGRNVDEALRTLQAIQYSQENPDEVCPVNWKPGSKTMKPDPVGSKVYFEAI.

Residues 3-161 (IRVGQKAPDF…ALRTLQAIQY (159 aa)) enclose the Thioredoxin domain. The Cysteine sulfenic acid (-SOH) intermediate role is filled by C49.

The protein belongs to the peroxiredoxin family. AhpC/Prx1 subfamily. Homodimer; disulfide-linked, upon oxidation.

It is found in the plastid. The protein localises to the chloroplast. It catalyses the reaction a hydroperoxide + [thioredoxin]-dithiol = an alcohol + [thioredoxin]-disulfide + H2O. Thiol-specific peroxidase that catalyzes the reduction of hydrogen peroxide and organic hydroperoxides to water and alcohols, respectively. Plays a role in cell protection against oxidative stress by detoxifying peroxides. The chain is 2-cysteine peroxiredoxin, chloroplastic from Chattonella marina var. antiqua (Red tide flagellate).